A 160-amino-acid chain; its full sequence is Phosphopantetheine adenylyltransferase (160 aa).

Substrate is bound at residue threonine 11. Residues 11–12 and histidine 19 each bind ATP; that span reads TF. Substrate is bound by residues lysine 43, leucine 75, and arginine 89. ATP-binding positions include 90–92, glutamate 100, and 125–131; these read GLR and HMFVSAS.

Belongs to the bacterial CoaD family. In terms of assembly, homohexamer. It depends on Mg(2+) as a cofactor.

The protein resides in the cytoplasm. It carries out the reaction (R)-4'-phosphopantetheine + ATP + H(+) = 3'-dephospho-CoA + diphosphate. It participates in cofactor biosynthesis; coenzyme A biosynthesis; CoA from (R)-pantothenate: step 4/5. Reversibly transfers an adenylyl group from ATP to 4'-phosphopantetheine, yielding dephospho-CoA (dPCoA) and pyrophosphate. This is Phosphopantetheine adenylyltransferase from Methylobacillus flagellatus (strain ATCC 51484 / DSM 6875 / VKM B-1610 / KT).